Here is a 345-residue protein sequence, read N- to C-terminus: Phosphoribosylformylglycinamidine cyclo-ligase (345 aa).

The protein belongs to the AIR synthase family.

It is found in the cytoplasm. The enzyme catalyses 2-formamido-N(1)-(5-O-phospho-beta-D-ribosyl)acetamidine + ATP = 5-amino-1-(5-phospho-beta-D-ribosyl)imidazole + ADP + phosphate + H(+). It participates in purine metabolism; IMP biosynthesis via de novo pathway; 5-amino-1-(5-phospho-D-ribosyl)imidazole from N(2)-formyl-N(1)-(5-phospho-D-ribosyl)glycinamide: step 2/2. The polypeptide is Phosphoribosylformylglycinamidine cyclo-ligase (Prochlorococcus marinus (strain MIT 9313)).